A 120-amino-acid chain; its full sequence is Large ribosomal subunit protein uL18 (120 aa).

It belongs to the universal ribosomal protein uL18 family. Part of the 50S ribosomal subunit; part of the 5S rRNA/L5/L18/L25 subcomplex. Contacts the 5S and 23S rRNAs.

In terms of biological role, this is one of the proteins that bind and probably mediate the attachment of the 5S RNA into the large ribosomal subunit, where it forms part of the central protuberance. The sequence is that of Large ribosomal subunit protein uL18 from Gluconacetobacter diazotrophicus (strain ATCC 49037 / DSM 5601 / CCUG 37298 / CIP 103539 / LMG 7603 / PAl5).